Here is a 329-residue protein sequence, read N- to C-terminus: DNA-directed RNA polymerase subunit alpha (329 aa).

The segment at 1 to 235 is alpha N-terminal domain (alpha-NTD); sequence MQGSVTEFLK…EQLEAFVDLR (235 aa). An alpha C-terminal domain (alpha-CTD) region spans residues 249–329; the sequence is FDPILLRPVD…DWPPASIADE (81 aa).

Belongs to the RNA polymerase alpha chain family. In terms of assembly, homodimer. The RNAP catalytic core consists of 2 alpha, 1 beta, 1 beta' and 1 omega subunit. When a sigma factor is associated with the core the holoenzyme is formed, which can initiate transcription.

It carries out the reaction RNA(n) + a ribonucleoside 5'-triphosphate = RNA(n+1) + diphosphate. Its function is as follows. DNA-dependent RNA polymerase catalyzes the transcription of DNA into RNA using the four ribonucleoside triphosphates as substrates. The polypeptide is DNA-directed RNA polymerase subunit alpha (Salmonella choleraesuis (strain SC-B67)).